Reading from the N-terminus, the 61-residue chain is Metallothionein-2 (61 aa).

Met-1 is modified (N-acetylmethionine). Residues 1 to 29 (MDPNCSCATDGSCSCSGSCKCKECKCTTC) are beta. A divalent metal cation contacts are provided by Cys-5, Cys-7, Cys-13, Cys-15, Cys-19, Cys-21, Cys-24, Cys-26, Cys-29, Cys-33, Cys-34, Cys-36, Cys-37, Cys-41, Cys-44, Cys-48, Cys-50, and Cys-57. Residues 30–61 (KKSCCSCCPVGCAKCSQGCVCKEASEKCSCCA) are alpha. Ser-58 is subject to Phosphoserine. Positions 59 and 60 each coordinate a divalent metal cation.

The protein belongs to the metallothionein superfamily. Type 1 family.

In terms of biological role, metallothioneins have a high content of cysteine residues that bind various heavy metals; these proteins are transcriptionally regulated by both heavy metals and glucocorticoids. In Mesocricetus auratus (Golden hamster), this protein is Metallothionein-2 (MT2).